The primary structure comprises 120 residues: Ribonuclease P protein component 2 (120 aa).

Belongs to the eukaryotic/archaeal RNase P protein component 2 family. As to quaternary structure, homodimer in solution. Component of RNase P which consists of a catalytic RNA component and at least 5 protein subunits. Forms a heterotetrameric subcomplex with Rnp3. Reconstituted enzyme missing individual protein subunits is suboptimally active, showing each subunit contributes to optimization of activity.

It is found in the cytoplasm. It catalyses the reaction Endonucleolytic cleavage of RNA, removing 5'-extranucleotides from tRNA precursor.. Part of ribonuclease P, a protein complex that generates mature tRNA molecules by cleaving their 5'-ends. The protein is Ribonuclease P protein component 2 of Pyrococcus horikoshii (strain ATCC 700860 / DSM 12428 / JCM 9974 / NBRC 100139 / OT-3).